The chain runs to 318 residues: Galactinol synthase 1 (318 aa).

Lys102 is a catalytic residue. The Mn(2+) site is built by Asp118, Asp120, and His244.

The protein belongs to the glycosyltransferase 8 family. Galactosyltransferase subfamily. Requires a divalent metal cation as cofactor. In terms of tissue distribution, expressed in seeds, mostly in radicle tips.

It is found in the cytoplasm. It carries out the reaction myo-inositol + UDP-alpha-D-galactose = alpha-D-galactosyl-(1-&gt;3)-1D-myo-inositol + UDP + H(+). Functionally, galactinol synthase involved in the biosynthesis of raffinose family oligosaccharides (RFOs) that function as osmoprotectants. May promote plant stress tolerance. The polypeptide is Galactinol synthase 1 (GOLS1) (Solanum lycopersicum (Tomato)).